We begin with the raw amino-acid sequence, 115 residues long: Phosphoribosyl-AMP cyclohydrolase (115 aa).

D80 lines the Mg(2+) pocket. Residue C81 coordinates Zn(2+). The Mg(2+) site is built by D82 and D84. Positions 97 and 104 each coordinate Zn(2+).

It belongs to the PRA-CH family. In terms of assembly, homodimer. The cofactor is Mg(2+). Zn(2+) is required as a cofactor.

Its subcellular location is the cytoplasm. The enzyme catalyses 1-(5-phospho-beta-D-ribosyl)-5'-AMP + H2O = 1-(5-phospho-beta-D-ribosyl)-5-[(5-phospho-beta-D-ribosylamino)methylideneamino]imidazole-4-carboxamide. It participates in amino-acid biosynthesis; L-histidine biosynthesis; L-histidine from 5-phospho-alpha-D-ribose 1-diphosphate: step 3/9. Functionally, catalyzes the hydrolysis of the adenine ring of phosphoribosyl-AMP. The sequence is that of Phosphoribosyl-AMP cyclohydrolase from Mycobacterium bovis (strain ATCC BAA-935 / AF2122/97).